A 124-amino-acid polypeptide reads, in one-letter code: Small ribosomal subunit protein uS12 (124 aa).

D89 is subject to 3-methylthioaspartic acid.

It belongs to the universal ribosomal protein uS12 family. In terms of assembly, part of the 30S ribosomal subunit. Contacts proteins S8 and S17. May interact with IF1 in the 30S initiation complex.

In terms of biological role, with S4 and S5 plays an important role in translational accuracy. Interacts with and stabilizes bases of the 16S rRNA that are involved in tRNA selection in the A site and with the mRNA backbone. Located at the interface of the 30S and 50S subunits, it traverses the body of the 30S subunit contacting proteins on the other side and probably holding the rRNA structure together. The combined cluster of proteins S8, S12 and S17 appears to hold together the shoulder and platform of the 30S subunit. The polypeptide is Small ribosomal subunit protein uS12 (Pasteurella multocida (strain Pm70)).